A 305-amino-acid polypeptide reads, in one-letter code: Ornithine carbamoyltransferase (305 aa).

Carbamoyl phosphate contacts are provided by residues 52–55 (STRT), glutamine 79, arginine 103, and 130–133 (HPCQ). L-ornithine is bound by residues asparagine 161, aspartate 222, and 226-227 (SM). Carbamoyl phosphate-binding positions include 262–263 (CL) and arginine 290.

This sequence belongs to the aspartate/ornithine carbamoyltransferase superfamily. OTCase family.

It is found in the cytoplasm. It carries out the reaction carbamoyl phosphate + L-ornithine = L-citrulline + phosphate + H(+). It functions in the pathway amino-acid biosynthesis; L-arginine biosynthesis; L-arginine from L-ornithine and carbamoyl phosphate: step 1/3. Reversibly catalyzes the transfer of the carbamoyl group from carbamoyl phosphate (CP) to the N(epsilon) atom of ornithine (ORN) to produce L-citrulline. The sequence is that of Ornithine carbamoyltransferase from Pelobacter propionicus (strain DSM 2379 / NBRC 103807 / OttBd1).